We begin with the raw amino-acid sequence, 973 residues long: FHF complex subunit HOOK-interacting protein 1B (973 aa).

Disordered regions lie at residues 466–493 (SSPSRPEHASWARGPGSPSVDSSSVVTV), 510–547 (SLGGSESPAPAPRSPGLATSPASSPGRRPSPVEEPGEL), and 573–647 (SAPY…EGAK). Residue S467 is modified to Phosphoserine. Residues 482 to 493 (SPSVDSSSVVTV) show a composition bias toward low complexity. 4 positions are modified to phosphoserine: S510, S523, S529, and S533. 2 stretches are compositionally biased toward low complexity: residues 529–538 (SPASSPGRRP) and 622–639 (GARESLGHLPPPQLNGLP). Phosphoserine occurs at positions 859 and 898.

The protein belongs to the FHIP family. In terms of assembly, component of the FTS/Hook/FHIP complex (FHF complex), composed of AKTIP/FTS, FHIP1B, and one or more members of the Hook family of proteins HOOK1, HOOK2, and HOOK3. The FHF complex associates with the homotypic vesicular sorting complex (the HOPS complex).

Component of the FTS/Hook/FHIP complex (FHF complex). The FHF complex may function to promote vesicle trafficking and/or fusion via the homotypic vesicular protein sorting complex (the HOPS complex). FHF complex promotes the distribution of AP-4 complex to the perinuclear area of the cell. The chain is FHF complex subunit HOOK-interacting protein 1B (FHIP1B) from Bos taurus (Bovine).